Here is a 163-residue protein sequence, read N- to C-terminus: NADH-quinone oxidoreductase subunit I (163 aa).

4Fe-4S ferredoxin-type domains lie at 54 to 84 and 94 to 123; these read LRRY…IDSA and TRYD…ETHI. [4Fe-4S] cluster is bound by residues C64, C67, C70, C74, C103, C106, C109, and C113.

Belongs to the complex I 23 kDa subunit family. In terms of assembly, NDH-1 is composed of 14 different subunits. Subunits NuoA, H, J, K, L, M, N constitute the membrane sector of the complex. [4Fe-4S] cluster is required as a cofactor.

The protein resides in the cell inner membrane. The enzyme catalyses a quinone + NADH + 5 H(+)(in) = a quinol + NAD(+) + 4 H(+)(out). Functionally, NDH-1 shuttles electrons from NADH, via FMN and iron-sulfur (Fe-S) centers, to quinones in the respiratory chain. The immediate electron acceptor for the enzyme in this species is believed to be ubiquinone. Couples the redox reaction to proton translocation (for every two electrons transferred, four hydrogen ions are translocated across the cytoplasmic membrane), and thus conserves the redox energy in a proton gradient. This chain is NADH-quinone oxidoreductase subunit I, found in Xylella fastidiosa (strain 9a5c).